The sequence spans 164 residues: 3-isopropylmalate dehydratase small subunit 1 (164 aa).

Belongs to the LeuD family. LeuD type 2 subfamily. As to quaternary structure, heterodimer of LeuC and LeuD.

The catalysed reaction is (2R,3S)-3-isopropylmalate = (2S)-2-isopropylmalate. It participates in amino-acid biosynthesis; L-leucine biosynthesis; L-leucine from 3-methyl-2-oxobutanoate: step 2/4. In terms of biological role, catalyzes the isomerization between 2-isopropylmalate and 3-isopropylmalate, via the formation of 2-isopropylmaleate. This chain is 3-isopropylmalate dehydratase small subunit 1 (leuD1), found in Pyrococcus furiosus (strain ATCC 43587 / DSM 3638 / JCM 8422 / Vc1).